We begin with the raw amino-acid sequence, 680 residues long: Structure-specific endonuclease subunit SLX4 (680 aa).

Disordered regions lie at residues 15-92, 141-183, and 450-490; these read EVAK…EPVV, ESSS…STQQ, and LGSG…ATRL. Over residues 22-33 the composition is skewed to acidic residues; it reads DSDEPIIDEDDL. Residues 60–86 show a composition bias toward basic and acidic residues; the sequence is NNSKDTFKETPLELVDKEEAIEDKAPN. Residues 156 to 174 show a composition bias toward basic residues; it reads LKSKKITKPKLTKTSKRTK. Residues 473–490 show a composition bias toward polar residues; it reads TVISRSPQSTRTPQATRL.

It belongs to the SLX4 family. Forms a heterodimer with SLX1. Phosphorylated in response to DNA damage.

The protein localises to the nucleus. In terms of biological role, regulatory subunit of the SLX1-SLX4 structure-specific endonuclease that resolves DNA secondary structures generated during DNA repair and recombination. Has endonuclease activity towards branched DNA substrates, introducing single-strand cuts in duplex DNA close to junctions with ss-DNA. The sequence is that of Structure-specific endonuclease subunit SLX4 from Vanderwaltozyma polyspora (strain ATCC 22028 / DSM 70294 / BCRC 21397 / CBS 2163 / NBRC 10782 / NRRL Y-8283 / UCD 57-17) (Kluyveromyces polysporus).